A 58-amino-acid chain; its full sequence is RIQSDLIRAALEDADMKNEKNILSSIMGSLGTIGNVVGNVCCSITKSCCASWLFPRLE.

The propeptide occupies 1 to 20 (RIQSDLIRAALEDADMKNEK).

Belongs to the conotoxin T superfamily. Post-translationally, contains 2 disulfide bonds that can be either 'C1-C3, C2-C4' or 'C1-C4, C2-C3', since these disulfide connectivities have been observed for conotoxins with cysteine framework V (for examples, see AC P0DQQ7 and AC P81755). As to expression, expressed by the venom duct.

The protein localises to the secreted. The polypeptide is Conotoxin Ar5.4 (Conus arenatus (Sand-dusted cone)).